Consider the following 57-residue polypeptide: uncharacterized protein (57 aa).

This is an uncharacterized protein from Escherichia coli (strain K12).